The chain runs to 768 residues: MSNLSKGTGSRKDTKMRIRAFPMTMDEKYVNSIWDLLKNAIQEIQRKNNSGLSFEELYRNAYTMVLHKHGEKLYTGLREVVTEHLINKVREDVLNSLNNNFLQTLNQAWNDHQTAMVMIRDILMYMDRVYVQQNNVENVYNLGLIIFRDQVVRYGCIRDHLRQTLLDMIARERKGEVVDRGAIRNACQMLMILGLEGRSVYEEDFEAPFLEMSAEFFQMESQKFLAENSASVYIKKVEARINEEIERVMHCLDKSTEEPIVKVVERELISKHMKTIVEMENSGLVHMLKNGKTEDLACMYKLFSRVPNGLKTMCECMSSYLREQGKALVSEEGEGKNPVDYIQGLLDLKSRFDRFLQESFNNDRLFKQTIAGDFEYFLNLNSRSPEYLSLFIDDKLKKGVKGLTEQEVETILDKAMVLFRFMQEKDVFERYYKQHLARRLLTNKSVSDDSEKNMISKLKTECGCQFTSKLEGMFRDMSISNTTMDEFRQHLQATGVSLGGVDLTVRVLTTGYWPTQSATPKCNIPPAPRHAFEIFRRFYLAKHSGRQLTLQHHMGSADLNATFYGPVKKEDGSEVGVGGAQVTGSNTRKHILQVSTFQMTILMLFNNREKYTFEEIQQETDIPERELVRALQSLACGKPTQRVLTKEPKSKEIESGHIFTVNDQFTSKLHRVKIQTVAAKQGESDPERKETRQKVDDDRKHEIEAAIVRIMKSRKKMQHNVLVAEVTQQLKARFLPSPVVIKKRIEGLIEREYLARTPEDRKVYTYVA.

Position 2 is an N-acetylserine (Ser-2). The segment at 2–41 is interaction with KLHL18; the sequence is SNLSKGTGSRKDTKMRIRAFPMTMDEKYVNSIWDLLKNAI. Ser-585 is modified (phosphoserine). Positions 677–698 are disordered; the sequence is VAAKQGESDPERKETRQKVDDD. Basic and acidic residues predominate over residues 682–698; that stretch reads GESDPERKETRQKVDDD. In terms of domain architecture, Cullin neddylation spans 698 to 760; sequence DRKHEIEAAI…REYLARTPED (63 aa). Residue Lys-712 forms a Glycyl lysine isopeptide (Lys-Gly) (interchain with G-Cter in NEDD8) linkage.

Belongs to the cullin family. In terms of assembly, forms neddylation-dependent homodimers. Component of multiple BCR (BTB-CUL3-RBX1) E3 ubiquitin-protein ligase complexes formed of CUL3, RBX1 and a variable BTB domain-containing protein acting as both, adapter to cullin and substrate recognition subunit. The BCR complex may be active as a heterodimeric complex, in which NEDD8, covalently attached to one CUL3 molecule, binds to the C-terminus of a second CUL3 molecule. Interacts with RBX1, RNF7, CYCE and TIP120A/CAND1. Part of the BCR(SPOP) containing SPOP, and of BCR containing homodimeric SPOPL or the heterodimer formed by SPOP and SPOPL. Part of the probable BCR(KLHL9-KLHL13) complex with BTB domain proteins KLHL9 and KLHL13. Part of the BCR(KLHL41) complex containing KLHL41. Component of the BCR(KLHL12) E3 ubiquitin ligase complex, at least composed of CUL3 and KLHL12 and RBX1. Component of the BCR(KLHL3) E3 ubiquitin ligase complex, at least composed of CUL3 and KLHL3 and RBX1. Part of the BCR(ENC1) complex containing ENC1. Part of a complex consisting of BMI1/PCGF4, CUL3 and SPOP. Part of a complex consisting of BRMS1, CUL3 and SPOP. Component of the BCR(KLHL21) E3 ubiquitin ligase complex, at least composed of CUL3, KLHL21 and RBX1. Component of the BCR(KLHL22) E3 ubiquitin ligase complex, at least composed of CUL3, KLHL22 and RBX1. Component of the BCR(KLHL25) E3 ubiquitin ligase complex, at least composed of CUL3, KLHL25 and RBX1. Part of a complex consisting of MACROH2A1, CUL3 and SPOP. Component of the BCR(KLHL42) E3 ubiquitin ligase complex, at least composed of CUL3 and KLHL42. Component of the BCR(KBTBD8) E3 ubiquitin ligase complex, at least composed of CUL3, KBTBD8 and RBX1. Interacts with KLHL42 (via the BTB domain). Interacts with KATNA1; the interaction is enhanced by KLHL42. Interacts with KCTD5, KLHL9, KLHL11, KLHL13, GAN, ZBTB16, KLHL3, KLHL15, KLHL20, KLHL36, GMCL2, BTBD1. Part of a complex that contains CUL3, RBX1 and GAN. Interacts (via BTB domain) with KLHL17; the interaction regulates surface GRIK2 expression. Interacts with KCTD7. Part of the BCR(GAN) complex containing GAN. Part of the BCR(KEAP1) complex containing KEAP1. vInteracts with KLHL10. Interacts with KAT5 and ATF2. Interacts with KCTD17 in the BCR(KCTD17) E3 ubiquitin ligase complex, at least composed of CUL3, KCTD17 and RBX1. Interacts (when neddylated) with ARIH1; leading to activate the E3 ligase activity of ARIH1. Interacts with COPS9. Interacts with PPP2R5B; this interaction is indirect and mediated through KLHL15-binding and leads to PPP2R5B proteasomal degradation. Interacts with RBBP8/CtIP; this interaction is indirect and mediated through KLHL15-binding and leads to RBBP8 proteasomal degradation. Interacts with KLHL24 in the BCR(KLHL24) E3 ubiquitin ligase complex, composed of CUL3, RBX1 and KLHL24. Interacts with RHOBTB2. Interacts (via BTB domain) with KLHL17; the interaction regulates surface GRIK2 expression. Interacts with AURKA and KLHL18 (via BTB domain). Interacts (unneddylated form) with DCUN1D1, DCUN1D2, DCUN1D3, DCUN1D4 and DCUN1D5; these interactions promote the cullin neddylation. Component of a BCR3 (BTB-CUL3-RBX1) E3 ubiquitin ligase complex, also named Cul3-RING ubiquitin ligase complex CUL3(KBTBD6/7), composed of CUL3, RBX1, KBTBD6 and KBTBD7. Component of the BCR(KBTBD2) E3 ubiquitin ligase complex, at least composed of CUL3, KBTBD2 and RBX1. Interacts with KBTBD2 (via the BTB domain). Component of the BCR(KBTBD4) E3 ubiquitin ligase complex, at least composed of CUL3, KBTBD4 and RBX1. Post-translationally, neddylated. Attachment of NEDD8 is required for the E3 ubiquitin-protein ligase activity of the BCR complex. Deneddylated via its interaction with the COP9 signalosome (CSN) complex.

The protein localises to the nucleus. Its subcellular location is the golgi apparatus. It localises to the cell projection. It is found in the cilium. The protein resides in the flagellum. The protein localises to the cytoplasm. Its subcellular location is the cytoskeleton. It localises to the spindle. It is found in the microtubule organizing center. The protein resides in the centrosome. The protein localises to the spindle pole. It participates in protein modification; protein ubiquitination. Its function is as follows. Core component of multiple cullin-RING-based BCR (BTB-CUL3-RBX1) E3 ubiquitin-protein ligase complexes which mediate the ubiquitination and subsequent proteasomal degradation of target proteins. BCR complexes and ARIH1 collaborate in tandem to mediate ubiquitination of target proteins. As a scaffold protein may contribute to catalysis through positioning of the substrate and the ubiquitin-conjugating enzyme. The E3 ubiquitin-protein ligase activity of the complex is dependent on the neddylation of the cullin subunit and is inhibited by the association of the deneddylated cullin subunit with TIP120A/CAND1. The functional specificity of the BCR complex depends on the BTB domain-containing protein as the substrate recognition component. BCR(KLHL42) is involved in ubiquitination of KATNA1. BCR(SPOP) is involved in ubiquitination of BMI1/PCGF4, BRMS1, MACROH2A1 and DAXX, GLI2 and GLI3. Can also form a cullin-RING-based BCR (BTB-CUL3-RBX1) E3 ubiquitin-protein ligase complex containing homodimeric SPOPL or the heterodimer formed by SPOP and SPOPL; these complexes have lower ubiquitin ligase activity. BCR(KLHL9-KLHL13) controls the dynamic behavior of AURKB on mitotic chromosomes and thereby coordinates faithful mitotic progression and completion of cytokinesis. BCR(KLHL12) is involved in ER-Golgi transport by regulating the size of COPII coats, thereby playing a key role in collagen export, which is required for embryonic stem (ES) cells division: BCR(KLHL12) acts by mediating monoubiquitination of SEC31 (SEC31A or SEC31B). BCR(KLHL3) acts as a regulator of ion transport in the distal nephron; by mediating ubiquitination of WNK4. The BCR(KLHL20) E3 ubiquitin ligase complex is involved in interferon response and anterograde Golgi to endosome transport: it mediates both ubiquitination leading to degradation and 'Lys-33'-linked ubiquitination. The BCR(KLHL21) E3 ubiquitin ligase complex regulates localization of the chromosomal passenger complex (CPC) from chromosomes to the spindle midzone in anaphase and mediates the ubiquitination of AURKB. The BCR(KLHL22) ubiquitin ligase complex mediates monoubiquitination of PLK1, leading to PLK1 dissociation from phosphoreceptor proteins and subsequent removal from kinetochores, allowing silencing of the spindle assembly checkpoint (SAC) and chromosome segregation. The BCR(KLHL22) ubiquitin ligase complex is also responsible for the amino acid-stimulated 'Lys-48' polyubiquitination and proteasomal degradation of DEPDC5. Through the degradation of DEPDC5, releases the GATOR1 complex-mediated inhibition of the TORC1 pathway. The BCR(KLHL25) ubiquitin ligase complex is involved in translational homeostasis by mediating ubiquitination and subsequent degradation of hypophosphorylated EIF4EBP1 (4E-BP1). The BCR(KLHL25) ubiquitin ligase complex is also involved in lipid synthesis by mediating ubiquitination and degradation of ACLY. The BCR(KBTBD8) complex acts by mediating monoubiquitination of NOLC1 and TCOF1, leading to remodel the translational program of differentiating cells in favor of neural crest specification. Involved in ubiquitination of cyclin E and of cyclin D1 (in vitro) thus involved in regulation of G1/S transition. Involved in the ubiquitination of KEAP1, ENC1 and KLHL41. In concert with ATF2 and RBX1, promotes degradation of KAT5 thereby attenuating its ability to acetylate and activate ATM. The BCR(KCTD17) E3 ubiquitin ligase complex mediates ubiquitination and degradation of TCHP, a down-regulator of cilium assembly, thereby inducing ciliogenesis. The BCR(KLHL24) E3 ubiquitin ligase complex mediates ubiquitination of KRT14, controls KRT14 levels during keratinocytes differentiation, and is essential for skin integrity. The BCR(KLHL18) E3 ubiquitin ligase complex mediates the ubiquitination of AURKA leading to its activation at the centrosome which is required for initiating mitotic entry. The BCR(KEAP1) E3 ubiquitin ligase complex acts as a key sensor of oxidative and electrophilic stress by mediating ubiquitination and degradation of NFE2L2/NRF2, a transcription factor regulating expression of many cytoprotective genes. As part of the CUL3(KBTBD6/7) E3 ubiquitin ligase complex functions mediates 'Lys-48' ubiquitination and proteasomal degradation of TIAM1. By controlling the ubiquitination of that RAC1 guanine exchange factors (GEF), regulates RAC1 signal transduction and downstream biological processes including the organization of the cytoskeleton, cell migration and cell proliferation. The BCR(KBTBD4) E3 ubiquitin ligase complex targets CoREST corepressor complex components RCOR1, KDM1A/LSD1 and HDAC2 for proteasomal degradation with RCOR1 likely to be the primary target while degradation of KDM1A and HDAC2 is likely due to their association with RCOR1. It also targets RCOR3, MIER2 and MIER3 for proteasomal degradation as well as associated proteins ZNF217 and RREB1 with degradation being dependent on the presence of an ELM2 domain in the target proteins. The BCR(ARMC5) complex mediates premature transcription termination of transcripts that are unfavorably configured for transcriptional elongation by mediating ubiquitination of Pol II subunit POLR2A. Required for 'Lys-63'-linked ubiquitination of large ribosomal subunit protein MRPL12. This is Cullin-3 (Cul3) from Rattus norvegicus (Rat).